A 56-amino-acid polypeptide reads, in one-letter code: Preprotein translocase subunit SecG (56 aa).

Residues 1-30 (MARKDKKTLPASGAGIVRYFNDDTAGVKLS) are Cytoplasmic-facing. Residues 31–52 (PKQVVIGTIIVALICIALRFTT) traverse the membrane as a helical segment. Over 53-56 (SVGY) the chain is Extracellular.

It belongs to the SEC61-beta family. Component of the protein translocase complex. Heterotrimer consisting of alpha (SecY), beta (SecG) and gamma (SecE) subunits. Can form oligomers of the heterotrimer.

The protein resides in the cell membrane. Functionally, involved in protein export. The function of the beta subunit is unknown, but it may be involved in stabilization of the trimeric complex. This Methanosphaera stadtmanae (strain ATCC 43021 / DSM 3091 / JCM 11832 / MCB-3) protein is Preprotein translocase subunit SecG.